The sequence spans 535 residues: Thermosome subunit gamma (535 aa).

This sequence belongs to the TCP-1 chaperonin family. Forms a heterooligomeric complex of two stacked nine-membered rings; one of alpha and the other of beta subunits.

Its subcellular location is the cytoplasm. The enzyme catalyses ATP + H2O = ADP + phosphate + H(+). In terms of biological role, molecular chaperone; binds unfolded polypeptides in vitro, and has a weak ATPase activity. This is Thermosome subunit gamma (thsC) from Saccharolobus shibatae (strain ATCC 51178 / DSM 5389 / JCM 8931 / NBRC 15437 / B12) (Sulfolobus shibatae).